The primary structure comprises 309 residues: Mitochondrial succinate-fumarate transporter 1 (309 aa).

Solcar repeat units follow at residues Ile11–Ala96, Arg108–Leu196, and Leu208–Leu298. 6 helical membrane passes run Ala17 to Ile37, Val65 to Leu85, Phe111 to Val131, Gly171 to Asn191, Met214 to Val234, and Gly273 to Asp293.

This sequence belongs to the mitochondrial carrier (TC 2.A.29) family. In terms of tissue distribution, expressed in root tips, cotyledons, hypocotyls, leaves, trichomes, stems, flowers, carpels, anthers, pollen and abscission zone of siliques.

It is found in the mitochondrion inner membrane. May transport cytoplasmic succinate, derived from fatty acid oxidation, into the mitochondrial matrix in exchange of fumarate during lipid mobilization in seed germination. Conversion of seed-reserved triacylglycerols into sucrose is necessary for growth before the onset of photosynthesis and involves fatty acid beta-oxidation, the glyoxylate cycle and gluconeogenesis. This Arabidopsis thaliana (Mouse-ear cress) protein is Mitochondrial succinate-fumarate transporter 1 (SFC1).